The chain runs to 602 residues: Aspartate--tRNA(Asp/Asn) ligase (602 aa).

Glu-175 is an L-aspartate binding site. The interval Gln-199–Lys-202 is aspartate. Arg-221 provides a ligand contact to L-aspartate. ATP is bound by residues Arg-221–Glu-223 and Gln-230. His-458 is an L-aspartate binding site. Glu-492 contacts ATP. An L-aspartate-binding site is contributed by Arg-499. An ATP-binding site is contributed by Gly-544–Arg-547.

It belongs to the class-II aminoacyl-tRNA synthetase family. Type 1 subfamily. Homodimer.

The protein resides in the cytoplasm. It catalyses the reaction tRNA(Asx) + L-aspartate + ATP = L-aspartyl-tRNA(Asx) + AMP + diphosphate. In terms of biological role, aspartyl-tRNA synthetase with relaxed tRNA specificity since it is able to aspartylate not only its cognate tRNA(Asp) but also tRNA(Asn). Reaction proceeds in two steps: L-aspartate is first activated by ATP to form Asp-AMP and then transferred to the acceptor end of tRNA(Asp/Asn). The protein is Aspartate--tRNA(Asp/Asn) ligase of Cupriavidus pinatubonensis (strain JMP 134 / LMG 1197) (Cupriavidus necator (strain JMP 134)).